The following is a 154-amino-acid chain: Putative pre-16S rRNA nuclease (154 aa).

Belongs to the YqgF nuclease family.

It is found in the cytoplasm. Could be a nuclease involved in processing of the 5'-end of pre-16S rRNA. The chain is Putative pre-16S rRNA nuclease from Rickettsia canadensis (strain McKiel).